The chain runs to 524 residues: Probable metalloreductase AIM14 (524 aa).

7 consecutive transmembrane segments (helical) span residues 24–44, 69–89, 104–121, 143–163, 179–199, 206–226, and 230–250; these read VNIK…VLSI, SIPF…LSIF, RLGR…FISL, WISR…LYKW, FLGV…VNVM, LFYI…AFHA, and VPLL…QRFF. Residues 105-222 form the Ferric oxidoreductase domain; the sequence is LGRMAYCLVP…VTLWMFVVLI (118 aa). Residues 248–372 enclose the FAD-binding FR-type domain; the sequence is RFFKSYYLHD…GGSGISFGLP (125 aa).

Belongs to the ferric reductase (FRE) family. AIM14 subfamily.

Its subcellular location is the membrane. Its function is as follows. Probable cell surface metalloreductase. May be involved in iron or copper homeostasis. The protein is Probable metalloreductase AIM14 (AIM14) of Scheffersomyces stipitis (strain ATCC 58785 / CBS 6054 / NBRC 10063 / NRRL Y-11545) (Yeast).